The following is a 229-amino-acid chain: Adenosylcobinamide-GDP ribazoletransferase (229 aa).

6 consecutive transmembrane segments (helical) span residues 31–51, 55–75, 111–131, 134–154, 176–196, and 208–228; these read AMLLAPLAALPLGLLVAAVLA, AVELPPLAVGLLAVGALAASS, AGVLATVVVAGVQAAALATLL, PLLAGALVCLSRCALWIVCCT, VAVLGGLLLSAVGGLVVLVLV, and GDVMGAAVELALAATLLAWAA.

It belongs to the CobS family. It depends on Mg(2+) as a cofactor.

The protein resides in the cell membrane. It catalyses the reaction alpha-ribazole + adenosylcob(III)inamide-GDP = adenosylcob(III)alamin + GMP + H(+). It carries out the reaction alpha-ribazole 5'-phosphate + adenosylcob(III)inamide-GDP = adenosylcob(III)alamin 5'-phosphate + GMP + H(+). The protein operates within cofactor biosynthesis; adenosylcobalamin biosynthesis; adenosylcobalamin from cob(II)yrinate a,c-diamide: step 7/7. Joins adenosylcobinamide-GDP and alpha-ribazole to generate adenosylcobalamin (Ado-cobalamin). Also synthesizes adenosylcobalamin 5'-phosphate from adenosylcobinamide-GDP and alpha-ribazole 5'-phosphate. This Nocardioides sp. (strain ATCC BAA-499 / JS614) protein is Adenosylcobinamide-GDP ribazoletransferase.